The sequence spans 833 residues: Leucine--tRNA ligase (833 aa).

The 'HIGH' region motif lies at 41 to 52 (PYPSGAGLHVGH). Residues 610-614 (KMSKS) carry the 'KMSKS' region motif. Lys613 contributes to the ATP binding site.

Belongs to the class-I aminoacyl-tRNA synthetase family.

The protein localises to the cytoplasm. It catalyses the reaction tRNA(Leu) + L-leucine + ATP = L-leucyl-tRNA(Leu) + AMP + diphosphate. The polypeptide is Leucine--tRNA ligase (Streptococcus sanguinis (strain SK36)).